Reading from the N-terminus, the 201-residue chain is Myelomonocytic growth factor (201 aa).

A signal peptide spans 1–23 (MCCLTPVLALALVLGAPWQALHG). Disulfide bonds link Cys61-Cys67 and Cys89-Cys99. N-linked (GlcNAc...) asparagine glycans are attached at residues Asn123 and Asn137.

It belongs to the IL-6 superfamily.

The protein localises to the secreted. Its function is as follows. Hematopoietic growth factor that stimulates the proliferation and colony formation of normal and transformed avian cells of the myeloid lineage. The polypeptide is Myelomonocytic growth factor (Gallus gallus (Chicken)).